Here is a 488-residue protein sequence, read N- to C-terminus: Palmitoleoyl-protein carboxylesterase notum1' (488 aa).

An N-terminal signal peptide occupies residues 1-19; that stretch reads MAGTLCVTLLLLLSTIAVG. A glycan (N-linked (GlcNAc...) asparagine) is linked at Asn90. Active-site charge relay system residues include Ser226, Asp334, and His383.

Belongs to the pectinacetylesterase family. Notum subfamily. In terms of tissue distribution, expressed in the egg and through cleavage to gastrulation stages. Enriched in the animal (prospective ectoderm) and dorsal regions in early gastrula. Shows a dynamic expression during embryogenesis, in particular during neural induction and antero-posterior (AP) patterning.

It localises to the secreted. It catalyses the reaction [Wnt protein]-O-(9Z)-hexadecenoyl-L-serine + H2O = [Wnt protein]-L-serine + (9Z)-hexadecenoate + H(+). Functionally, carboxylesterase that acts as a key negative regulator of the Wnt signaling pathway by specifically mediating depalmitoleoylation of WNT proteins. Serine palmitoleoylation of WNT proteins is required for efficient binding to frizzled receptors. Functions in the prospective ectoderm and is required for neural induction. The protein is Palmitoleoyl-protein carboxylesterase notum1' of Xenopus laevis (African clawed frog).